A 31-amino-acid polypeptide reads, in one-letter code: MLTITSYFGFLLTALTITSALFIGLSKIRLI.

A helical transmembrane segment spans residues I4–S26.

It belongs to the PetL family. The 4 large subunits of the cytochrome b6-f complex are cytochrome b6, subunit IV (17 kDa polypeptide, PetD), cytochrome f and the Rieske protein, while the 4 small subunits are PetG, PetL, PetM and PetN. The complex functions as a dimer.

Its subcellular location is the plastid. It is found in the chloroplast thylakoid membrane. Functionally, component of the cytochrome b6-f complex, which mediates electron transfer between photosystem II (PSII) and photosystem I (PSI), cyclic electron flow around PSI, and state transitions. PetL is important for photoautotrophic growth as well as for electron transfer efficiency and stability of the cytochrome b6-f complex. This Lactuca sativa (Garden lettuce) protein is Cytochrome b6-f complex subunit 6.